The chain runs to 311 residues: MNSLPEDLLAMILVKLPIKIFTTFKIVCTQWESMVDSPYFRDLFLSIHQNSHYSSWSILSRCDEEVIAHYGCNTWGLQRSLHFYISSFLTKKFETQRNNYKVWSYSTDVGMILISENCICVKNRSLYVANPVSQECVEIPSHGYLKKVSCPLGIATRTENGVLLDYKVVLFNGSDTFRRLLIYSSQTGMWSINTVDLTVSGFHNQSPISLHGSIHWIASTSHSEDVAVSFDLYATGTSSVQCRVTTFPDFGKHPKFTRSFSTCQGSLMYMNIISITKVDGSLEIISARLYWFLKEKNGRKVLPQCQPTPLS.

The F-box domain occupies 1 to 43; that stretch reads MNSLPEDLLAMILVKLPIKIFTTFKIVCTQWESMVDSPYFRDL.

The sequence is that of Putative F-box protein At3g28280 from Arabidopsis thaliana (Mouse-ear cress).